The following is a 146-amino-acid chain: Hemoglobin subunit beta-1 (146 aa).

One can recognise a Globin domain in the interval histidine 2–histidine 146. Residue histidine 92 coordinates heme b.

It belongs to the globin family. As to quaternary structure, heterotetramer of two alpha chains and two beta chains. In terms of tissue distribution, red blood cells.

Its function is as follows. Involved in oxygen transport from the lung to the various peripheral tissues. This Saara hardwickii (Indian spiny-tailed lizard) protein is Hemoglobin subunit beta-1.